The primary structure comprises 245 residues: Protein crossbronx (245 aa).

A UBC core domain is found at His-20–Ala-177.

Belongs to the ubiquitin-conjugating enzyme family. FTS subfamily.

This Drosophila mojavensis (Fruit fly) protein is Protein crossbronx (cbx).